Here is a 372-residue protein sequence, read N- to C-terminus: Ketol-acid reductoisomerase (NADP(+)) (372 aa).

Positions 1–25 (MTETKTQTETETDEEEGTDTDTALD) are disordered. Positions 10–19 (TETDEEEGTD) are enriched in acidic residues. Positions 24–205 (LDTTIYYDDD…GCTRAGAIET (182 aa)) constitute a KARI N-terminal Rossmann domain. NADP(+) contacts are provided by residues 49-52 (YGSQ), S75, S77, and 107-110 (DTVQ). The active site involves H131. G157 contributes to the NADP(+) binding site. Residues 206 to 351 (TFREETETDL…EPLRDLFAWS (146 aa)) enclose the KARI C-terminal knotted domain. 4 residues coordinate Mg(2+): D214, E218, E250, and E254. Position 275 (S275) interacts with substrate. The segment at 351 to 372 (SDNEETNDESDVVSEPEAAADD) is disordered. Residues 352–372 (DNEETNDESDVVSEPEAAADD) show a composition bias toward acidic residues.

The protein belongs to the ketol-acid reductoisomerase family. Mg(2+) is required as a cofactor.

The enzyme catalyses (2R)-2,3-dihydroxy-3-methylbutanoate + NADP(+) = (2S)-2-acetolactate + NADPH + H(+). The catalysed reaction is (2R,3R)-2,3-dihydroxy-3-methylpentanoate + NADP(+) = (S)-2-ethyl-2-hydroxy-3-oxobutanoate + NADPH + H(+). The protein operates within amino-acid biosynthesis; L-isoleucine biosynthesis; L-isoleucine from 2-oxobutanoate: step 2/4. It participates in amino-acid biosynthesis; L-valine biosynthesis; L-valine from pyruvate: step 2/4. In terms of biological role, involved in the biosynthesis of branched-chain amino acids (BCAA). Catalyzes an alkyl-migration followed by a ketol-acid reduction of (S)-2-acetolactate (S2AL) to yield (R)-2,3-dihydroxy-isovalerate. In the isomerase reaction, S2AL is rearranged via a Mg-dependent methyl migration to produce 3-hydroxy-3-methyl-2-ketobutyrate (HMKB). In the reductase reaction, this 2-ketoacid undergoes a metal-dependent reduction by NADPH to yield (R)-2,3-dihydroxy-isovalerate. The chain is Ketol-acid reductoisomerase (NADP(+)) from Haloquadratum walsbyi (strain DSM 16790 / HBSQ001).